Reading from the N-terminus, the 885-residue chain is Glycerol-3-phosphate acyltransferase (885 aa).

Residues 1–17 show a composition bias toward pro residues; the sequence is MPEQNPLPFPDGQPSPP. Residues 1 to 26 are disordered; it reads MPEQNPLPFPDGQPSPPSTAAADTGA. Positions 362-367 match the HXXXXD motif motif; sequence HRSHMD.

It belongs to the GPAT/DAPAT family.

Its subcellular location is the cell inner membrane. The catalysed reaction is sn-glycerol 3-phosphate + an acyl-CoA = a 1-acyl-sn-glycero-3-phosphate + CoA. Its pathway is phospholipid metabolism; CDP-diacylglycerol biosynthesis; CDP-diacylglycerol from sn-glycerol 3-phosphate: step 1/3. This chain is Glycerol-3-phosphate acyltransferase, found in Xanthomonas axonopodis pv. citri (strain 306).